The chain runs to 127 residues: Small ribosomal subunit protein uS13 (127 aa).

The interval Arg90–Lys127 is disordered. The span at Gln101 to Lys127 shows a compositional bias: basic residues.

It belongs to the universal ribosomal protein uS13 family. In terms of assembly, part of the 30S ribosomal subunit. Forms a loose heterodimer with protein S19. Forms two bridges to the 50S subunit in the 70S ribosome.

Functionally, located at the top of the head of the 30S subunit, it contacts several helices of the 16S rRNA. In the 70S ribosome it contacts the 23S rRNA (bridge B1a) and protein L5 of the 50S subunit (bridge B1b), connecting the 2 subunits; these bridges are implicated in subunit movement. Contacts the tRNAs in the A and P-sites. The chain is Small ribosomal subunit protein uS13 from Rippkaea orientalis (strain PCC 8801 / RF-1) (Cyanothece sp. (strain PCC 8801)).